Reading from the N-terminus, the 271-residue chain is Hematopoietically-expressed homeobox protein Hhex (271 aa).

Residues 1 to 138 form an interaction with SOX13 region; that stretch reads MQFPHPGPAA…PFLQRPLHKR (138 aa). Ser-54 is modified (phosphoserine). The homeobox DNA-binding region spans 138–197; it reads RKGGQVRFSNDQTVELEKKFETQKYLSPPERKRLAKMLQLSERQVKTWFQNRRAKWRRLK. The tract at residues 138–271 is required for WNT signaling induction; it reads RKGGQVRFSN…EGDKGYFNAG (134 aa). Residues 195–271 form a disordered region; that stretch reads RLKQENPQSN…EGDKGYFNAG (77 aa). Polar residues predominate over residues 212 to 242; that stretch reads LDTSCEQGQDLPSEQNKGASLDRSQCSPSPA. Residues 245–261 are compositionally biased toward acidic residues; that stretch reads EDPDSEISEDSDQEVDI.

Interacts with CD81; the interaction prevents nuclear translocation of HHEX. Interacts (via N-terminus) with SOX13; abolishes the SOX13-mediated inhibition of WNT-mediated transcriptional activity via competitive inhibition of the SOX13-TCF7 complex. Interacts with EIF4E; the interaction inhibits EIF4E-mediated mRNA nuclear export.

The protein resides in the nucleus. Its subcellular location is the nuclear body. It is found in the cytoplasm. In terms of biological role, recognizes the DNA sequence 5'-ATTAA-3'. Transcriptional repressor. Activator of WNT-mediated transcription in conjunction with CTNNB1. Establishes anterior identity at two levels; acts early to enhance canonical WNT-signaling by repressing expression of TLE4, and acts later to inhibit NODAL-signaling by directly targeting NODAL. Inhibits EIF4E-mediated mRNA nuclear export. May play a role in hematopoietic differentiation. The chain is Hematopoietically-expressed homeobox protein Hhex (Hhex) from Mus musculus (Mouse).